The sequence spans 119 residues: Large ribosomal subunit protein uL22 (119 aa).

Belongs to the universal ribosomal protein uL22 family. As to quaternary structure, part of the 50S ribosomal subunit.

Its function is as follows. This protein binds specifically to 23S rRNA; its binding is stimulated by other ribosomal proteins, e.g. L4, L17, and L20. It is important during the early stages of 50S assembly. It makes multiple contacts with different domains of the 23S rRNA in the assembled 50S subunit and ribosome. The globular domain of the protein is located near the polypeptide exit tunnel on the outside of the subunit, while an extended beta-hairpin is found that lines the wall of the exit tunnel in the center of the 70S ribosome. This chain is Large ribosomal subunit protein uL22, found in Bifidobacterium longum (strain DJO10A).